Here is a 623-residue protein sequence, read N- to C-terminus: Zinc finger protein 131 (623 aa).

Residues 34-98 form the BTB domain; that stretch reads TDITLIVDGH…TYTAKLMIQG (65 aa). The Nuclear localization signal 1 signature appears at 137–148; that stretch reads TGKNEAKKRKIA. C2H2-type zinc fingers lie at residues 261-283, 288-311, and 328-350; these read FHCE…MKSH, FKCE…NCYH, and HVCQ…LRKH. Residues Lys-289 and Lys-295 each participate in a glycyl lysine isopeptide (Lys-Gly) (interchain with G-Cter in SUMO2) cross-link. Positions 317–328 match the Nuclear localization signal 2 motif; it reads VSKKQRTGKKIH. The C2H2-type 4; degenerate zinc-finger motif lies at 356-381; that stretch reads FECPNCHERFARNSTLKCHLTACQTG. 2 C2H2-type zinc fingers span residues 392 to 414 and 420 to 443; these read YECQ…LVIH and NHCT…SDAH. Residues 573–617 show a composition bias toward basic and acidic residues; it reads NQEERESSQADAAEAAREDHEDAEDLETKPTVDSEAEKAENEDRT. The tract at residues 573–623 is disordered; the sequence is NQEERESSQADAAEAAREDHEDAEDLETKPTVDSEAEKAENEDRTALPVLE. Lys-601 participates in a covalent cross-link: Glycyl lysine isopeptide (Lys-Gly) (interchain with G-Cter in SUMO).

The protein belongs to the krueppel C2H2-type zinc-finger protein family. Post-translationally, monosumoylated at Lys-601 by CBX4 and UHRF2. Sumoylation may potentiate ZNF131 inhibition of estrogen signaling. Sumoylation does not interfere with ubiquitination. Ubiquitinated. As to expression, predominant expression is found in different brain areas such as the occipital and temporal lobe, the nucleus caudatus, hippocampus, and the cerebellum as well as in testis and thymus.

The protein resides in the nucleus. Its function is as follows. Plays a role during development and organogenesis as well as in the function of the adult central nervous system. May be involved in transcriptional regulation as a repressor of ESR1/ER-alpha signaling. This chain is Zinc finger protein 131 (ZNF131), found in Homo sapiens (Human).